The sequence spans 415 residues: MITVLVLNAGSSSLKASLYRLAPEIGATAVRPPAPLWQGLLDWGQNPTVARLKVTTANQHYEANLTHPEGGIAGLRDWLKSLLDTLTSGQTKLLENLAEITIIGHRVVHGGSRYQAPVRVDAQVKAAISELSEYAPLHNPANLLGMELMADICPQTPQVAVFDTAFHAQLPAVARTYAIPYELTTAGIQRYGFHGISHQYVSERAATLLQRPLAELHLITCHLGNGCSLTAVKGGVSVETTMGFTPTAGVMMGTRCGDIDPGILLYLLRRGWTVAELDRLVNRQSGLLGVSGVSNDLRQILAAIDQGNPQAQLAYDCFIYSLQRGIASLLPALGRLDGLVFTAGIGENAPGVRRDICRGLGWLGIELDSTANEKGQGDRNIALPTAPVSVLVVQTQEDWAIARACGQLLSLPISS.

Mg(2+) is bound at residue asparagine 8. An ATP-binding site is contributed by lysine 15. Arginine 106 serves as a coordination point for substrate. Aspartate 163 serves as the catalytic Proton donor/acceptor. Residues 222 to 226 (HLGNG), 296 to 298 (DLR), and 344 to 348 (GIGEN) each bind ATP. Glutamate 397 is a Mg(2+) binding site.

This sequence belongs to the acetokinase family. As to quaternary structure, homodimer. The cofactor is Mg(2+). Mn(2+) serves as cofactor.

It is found in the cytoplasm. It catalyses the reaction acetate + ATP = acetyl phosphate + ADP. The protein operates within metabolic intermediate biosynthesis; acetyl-CoA biosynthesis; acetyl-CoA from acetate: step 1/2. In terms of biological role, catalyzes the formation of acetyl phosphate from acetate and ATP. Can also catalyze the reverse reaction. This Thermosynechococcus vestitus (strain NIES-2133 / IAM M-273 / BP-1) protein is Acetate kinase.